We begin with the raw amino-acid sequence, 602 residues long: Elongation factor 4 (602 aa).

The 182-residue stretch at 8–189 (KNIRNFSIIA…KIITTIPAPS (182 aa)) folds into the tr-type G domain. GTP-binding positions include 20-25 (DHGKST) and 136-139 (NKID).

Belongs to the TRAFAC class translation factor GTPase superfamily. Classic translation factor GTPase family. LepA subfamily.

Its subcellular location is the cell inner membrane. The enzyme catalyses GTP + H2O = GDP + phosphate + H(+). In terms of biological role, required for accurate and efficient protein synthesis under certain stress conditions. May act as a fidelity factor of the translation reaction, by catalyzing a one-codon backward translocation of tRNAs on improperly translocated ribosomes. Back-translocation proceeds from a post-translocation (POST) complex to a pre-translocation (PRE) complex, thus giving elongation factor G a second chance to translocate the tRNAs correctly. Binds to ribosomes in a GTP-dependent manner. This Helicobacter pylori (strain HPAG1) protein is Elongation factor 4.